A 352-amino-acid chain; its full sequence is C-C chemokine receptor type 5 (352 aa).

The Extracellular portion of the chain corresponds to Met1–Ala30. At Tyr3 the chain carries Sulfotyrosine. O-linked (GalNAc...) serine glycosylation is found at Ser6 and Ser7. Sulfotyrosine is present on residues Tyr10 and Tyr14. 2 disulfides stabilise this stretch: Cys20–Cys269 and Cys101–Cys178. A helical membrane pass occupies residues Gln31 to Cys58. At Lys59–Tyr68 the chain is on the cytoplasmic side. The helical transmembrane segment at Leu69 to Tyr89 threads the bilayer. Residues Ala90–Gln102 lie on the Extracellular side of the membrane. Residues Phe103–Ile124 form a helical membrane-spanning segment. At Asp125–Thr141 the chain is on the cytoplasmic side. A helical transmembrane segment spans residues Val142–Phe166. The Extracellular portion of the chain corresponds to Thr167–Met198. A helical membrane pass occupies residues Val199–Leu218. The Cytoplasmic portion of the chain corresponds to Lys219–Arg235. The chain crosses the membrane as a helical span at residues Leu236–Tyr260. At Gln261 to Gln277 the chain is on the extracellular side. Residues Ala278–Gly301 traverse the membrane as a helical segment. Topologically, residues Glu302–Leu352 are cytoplasmic. Residues Cys321, Cys323, and Cys324 are each lipidated (S-palmitoyl cysteine). Residues Ser337, Ser342, and Ser349 each carry the phosphoserine; by BARK1 modification.

Belongs to the G-protein coupled receptor 1 family. In terms of assembly, interacts with PRAF2. Efficient ligand binding to CCL3/MIP-1alpha and CCL4/MIP-1beta requires sulfation, O-glycosylation and sialic acid modifications. Glycosylation on Ser-6 is required for efficient binding of CCL4. Interacts with GRK2. Interacts with ARRB1 and ARRB2. Interacts with CNIH4. Interacts with S100A4; this interaction stimulates T-lymphocyte chemotaxis. Post-translationally, sulfated on at least 2 of the N-terminal tyrosines. Sulfation is required for efficient binding of the chemokines, CCL3 and CCL4. Palmitoylation in the C-terminal is important for cell surface expression. In terms of processing, phosphorylation on serine residues in the C-terminal is stimulated by binding CC chemokines especially by APO-RANTES. Post-translationally, O-glycosylated, but not N-glycosylated. Ser-6 appears to be the major site even if Ser-7 may be also O-glycosylated. Also sialylated glycans present which contribute to chemokine binding. Ser-17 may also be glycosylated and, if so, with small moieties such as a T-antigen.

It is found in the cell membrane. Its function is as follows. Receptor for a number of inflammatory CC-chemokines including CCL3/MIP-1-alpha, CCL4/MIP-1-beta and RANTES and subsequently transduces a signal by increasing the intracellular calcium ion level. May play a role in the control of granulocytic lineage proliferation or differentiation. Participates in T-lymphocyte migration to the infection site by acting as a chemotactic receptor. This chain is C-C chemokine receptor type 5 (CCR5), found in Plecturocebus moloch (Dusky titi monkey).